The sequence spans 466 residues: Histidine--tRNA ligase (466 aa).

The protein belongs to the class-II aminoacyl-tRNA synthetase family. As to quaternary structure, homodimer.

Its subcellular location is the cytoplasm. It catalyses the reaction tRNA(His) + L-histidine + ATP = L-histidyl-tRNA(His) + AMP + diphosphate + H(+). This chain is Histidine--tRNA ligase, found in Bifidobacterium animalis subsp. lactis (strain AD011).